Reading from the N-terminus, the 196-residue chain is Large ribosomal subunit protein eL15 (196 aa).

The interval 155–196 (THRGRAERGLTSAGKKGRGQRRKGKGTEKNYPSVQAHDRRGK) is disordered. Basic residues predominate over residues 169 to 178 (KKGRGQRRKG).

The protein belongs to the eukaryotic ribosomal protein eL15 family.

This is Large ribosomal subunit protein eL15 from Methanocella arvoryzae (strain DSM 22066 / NBRC 105507 / MRE50).